The sequence spans 504 residues: MPELATSGNAFDKRRFSRRGFLGAGIASGFALAACASKPTASGAAGMTAAIDAAEAARPHSGRTVTATLTPQPARIDLGGPIVSTLTYGNTIPGPLIRATVGDEIVVSVTNRLGDPTSVHWHGIALRNDMDGTEPATANIGPGGDFTYRFSVPDPGTYWAHPHVGLQGDHGLYLPVVVDDPTEPGHYDAEWIIILDDWTDGIGKSPQQLYGELTDPNKPTMQNTTGMPEGEGVDSNLLGGDGGDIAYPYYLINGRIPVAATSFKAKPGQRIRIRIINSAADTAFRIALAGHSMTVTHTDGYPVIPTEVDALLIGMAERYDVMVTAAGGVFPLVALAEGKNALARALLSTGAGSPPDPQFRPDELNWRVGTVEMFTAATTANLGRPEPTHDLPVTLGGTMAKYDWTINGEPYSTTNPLHVRLGQRPTLMFDNTTMMYHPIHLHGHTFQMIKADGSPGARKDTVIVLPKQKMRAVLVADNPGVWVMHCHNNYHQVAGMATRLDYIL.

Residues 1–44 (MPELATSGNAFDKRRFSRRGFLGAGIASGFALAACASKPTASGA) constitute a signal peptide (tat-type signal). Residues H120, H122, H161, and H163 each coordinate Cu cation. Residues 190-349 (EWIIILDDWT…NALARALLST (160 aa)) form the Plastocyanin-like domain. Positions 437, 440, 442, 485, 486, 487, and 491 each coordinate Cu cation.

The protein belongs to the multicopper oxidase family. Cu cation serves as cofactor. Post-translationally, predicted to be exported by the Tat system. The position of the signal peptide cleavage has not been experimentally proven.

The protein localises to the cell inner membrane. The protein resides in the periplasm. The enzyme catalyses 4 Fe(2+) + O2 + 4 H(+) = 4 Fe(3+) + 2 H2O. Required for copper resistance. In vitro, oxidizes organic substrates and Fe(2+). May act in vivo by oxidation of toxic periplasmic Cu(+). The protein is Multicopper oxidase MmcO of Mycobacterium tuberculosis (strain ATCC 25618 / H37Rv).